Here is a 263-residue protein sequence, read N- to C-terminus: Endonuclease 8 (263 aa).

The Schiff-base intermediate with DNA role is filled by P2. E3 (proton donor) is an active-site residue. The Proton donor; for beta-elimination activity role is filled by K53. Q70, R125, and N169 together coordinate DNA. The FPG-type zinc-finger motif lies at 229 to 263 (KVFHRDGEPCERCGSIIEKTTLSSRPFYWCPGCQH). The active-site Proton donor; for delta-elimination activity is R253.

Belongs to the FPG family. Zn(2+) serves as cofactor.

The enzyme catalyses 2'-deoxyribonucleotide-(2'-deoxyribose 5'-phosphate)-2'-deoxyribonucleotide-DNA = a 3'-end 2'-deoxyribonucleotide-(2,3-dehydro-2,3-deoxyribose 5'-phosphate)-DNA + a 5'-end 5'-phospho-2'-deoxyribonucleoside-DNA + H(+). In terms of biological role, involved in base excision repair of DNA damaged by oxidation or by mutagenic agents. Acts as a DNA glycosylase that recognizes and removes damaged bases. Has a preference for oxidized pyrimidines, such as thymine glycol, 5,6-dihydrouracil and 5,6-dihydrothymine. Has AP (apurinic/apyrimidinic) lyase activity and introduces nicks in the DNA strand. Cleaves the DNA backbone by beta-delta elimination to generate a single-strand break at the site of the removed base with both 3'- and 5'-phosphates. This Escherichia coli (strain K12 / MC4100 / BW2952) protein is Endonuclease 8.